The primary structure comprises 428 residues: 3-phosphoshikimate 1-carboxyvinyltransferase (428 aa).

Residues Lys-20, Ser-21, and Arg-25 each coordinate 3-phosphoshikimate. A phosphoenolpyruvate-binding site is contributed by Lys-20. 2 residues coordinate phosphoenolpyruvate: Gly-92 and Arg-120. Positions 166, 168, 314, and 341 each coordinate 3-phosphoshikimate. A phosphoenolpyruvate-binding site is contributed by Gln-168. The active-site Proton acceptor is Asp-314. Arg-345 and Arg-387 together coordinate phosphoenolpyruvate.

This sequence belongs to the EPSP synthase family. Monomer.

Its subcellular location is the cytoplasm. The catalysed reaction is 3-phosphoshikimate + phosphoenolpyruvate = 5-O-(1-carboxyvinyl)-3-phosphoshikimate + phosphate. The protein operates within metabolic intermediate biosynthesis; chorismate biosynthesis; chorismate from D-erythrose 4-phosphate and phosphoenolpyruvate: step 6/7. In terms of biological role, catalyzes the transfer of the enolpyruvyl moiety of phosphoenolpyruvate (PEP) to the 5-hydroxyl of shikimate-3-phosphate (S3P) to produce enolpyruvyl shikimate-3-phosphate and inorganic phosphate. This chain is 3-phosphoshikimate 1-carboxyvinyltransferase, found in Listeria monocytogenes serotype 4b (strain CLIP80459).